Consider the following 127-residue polypeptide: Spore germination protein 1 (127 aa).

Residues 1–25 (MNIKNSLILIISTIFVLSMINGGLT) form the signal peptide. N-linked (GlcNAc...) asparagine glycans are attached at residues Asn-54 and Asn-118.

The protein belongs to the Dictyostelium gerABC family.

The protein resides in the secreted. The sequence is that of Spore germination protein 1 (gerA) from Dictyostelium discoideum (Social amoeba).